A 321-amino-acid chain; its full sequence is Hex-5-enoyl-[acyl-carrier protein] acetylenase (321 aa).

The next 2 membrane-spanning stretches (helical) occupy residues phenylalanine 36–tryptophan 56 and valine 62–leucine 82. The Histidine box-1 motif lies at histidine 83–histidine 88. The chain crosses the membrane as a helical span at residues valine 99–valine 119. A Histidine box-2 motif is present at residues histidine 120–histidine 124. A helical membrane pass occupies residues tyrosine 188–glycine 208. Residues glutamine 269–histidine 273 carry the Histidine box-3 motif.

The protein belongs to the fatty acid desaturase type 2 family. Fe(2+) is required as a cofactor.

It is found in the membrane. It catalyses the reaction 5-hexenoyl-[ACP] + 2 reduced [2Fe-2S]-[ferredoxin] + O2 + 2 H(+) = 5-hexynoyl-[ACP] + 2 oxidized [2Fe-2S]-[ferredoxin] + 2 H2O. The enzyme catalyses hexanoyl-[ACP] + 2 reduced [2Fe-2S]-[ferredoxin] + O2 + 2 H(+) = 5-hexenoyl-[ACP] + 2 oxidized [2Fe-2S]-[ferredoxin] + 2 H2O. In terms of biological role, desaturase involved in the biosynthesis of jamaicamides, which show sodium channel blocking activity and fish toxicity. Catalyzes the conversion of 5-hexenoyl loaded onto the acyl carrier protein JamC (5-hexenoyl-JamC) to 5-hexynoyl-JamC. Can also catalyze the conversion of hexanoyl-JamC to 5-hexenoyl-JamC, but it cannot use free 5-hexenoic acid, 5-hexenoyl-CoA, 2-hexenoyl-JamC, 3-hexenoyl-JamC or 4-hexenoyl-JamC. Is specific for C(6) chains, and cannot use 4-pentenoyl-JamC, 6-heptenoyl-JamC or 7-octenoyl-JamC as substrate. The chain is Hex-5-enoyl-[acyl-carrier protein] acetylenase from Moorena producens (strain JHB).